Here is a 326-residue protein sequence, read N- to C-terminus: Vascular endothelial growth factor D (326 aa).

Residues 1–21 form the signal peptide; the sequence is MYGEWAAVNILMMSYVYLVQG. A propeptide spanning residues 22–93 is cleaved from the precursor; it reads FSIEHRAVKD…SRSTSHRSTR (72 aa). Cystine bridges form between Cys116/Cys158, Cys147/Cys194, and Cys151/Cys196. Residues Asn160 and Asn190 are each glycosylated (N-linked (GlcNAc...) asparagine). Positions 211 to 326 are excised as a propeptide; it reads SIQIPEEDQC…CRSMVFSLSP (116 aa). The 1; approximate repeat unit spans residues 227-242; the sequence is CPVDMLWDNTKCKCVL. The 4 X 16 AA repeats of C-X(10)-C-X-C-X(1,3)-C stretch occupies residues 227-317; sequence CPVDMLWDNT…KHKMFHPDTC (91 aa). 2 consecutive repeat copies span residues 263–278 and 282–298. A glycan (N-linked (GlcNAc...) asparagine) is linked at Asn292. One copy of the 4; truncated repeat lies at 306-317; that stretch reads CQKHKMFHPDTC.

The protein belongs to the PDGF/VEGF growth factor family. In terms of assembly, homodimer; non-covalent and antiparallel. Undergoes a complex proteolytic maturation which generates a variety of processed secreted forms with increased activity toward VEGFR-3 and VEGFR-2. VEGF-D first form an antiparallel homodimer linked by disulfide bonds before secretion. The fully processed VEGF-D is composed mostly of two VEGF homology domains (VHDs) bound by non-covalent interactions. In terms of tissue distribution, highly expressed in the spleen, kidney, lung, tongue, ovary and mammary gland.

Its subcellular location is the secreted. Growth factor active in angiogenesis, lymphangiogenesis and endothelial cell growth, stimulating their proliferation and migration and also has effects on the permeability of blood vessels. May function in the formation of the venous and lymphatic vascular systems during embryogenesis, and also in the maintenance of differentiated lymphatic endothelium in adults. Binds and activates VEGFR-3 (Flt4) receptor. The chain is Vascular endothelial growth factor D from Rattus norvegicus (Rat).